We begin with the raw amino-acid sequence, 265 residues long: Basic leucine zipper 6 (265 aa).

2 disordered regions span residues 1–24 (MAQL…SAGG) and 77–139 (LMSM…RDPK). Over residues 85 to 97 (GGSSAPGSDNGGS) the composition is skewed to low complexity. Residues 122–132 (TQEQAAATSPT) are compositionally biased toward polar residues. The bZIP domain occupies 137 to 189 (DPKRVKRILANRQSAQRSRVRKLQYISELERSVTTLQNEVSVLSPRVAFLDQQ). The basic motif stretch occupies residues 139-158 (KRVKRILANRQSAQRSRVRK). A leucine-zipper region spans residues 165–186 (LERSVTTLQNEVSVLSPRVAFL). Residues 239 to 265 (LSGGLAADHAHVHGGPPPVRAEKELMS) are disordered.

As to expression, expressed in roots, shoots and panicles.

The protein resides in the nucleus. In terms of biological role, transcription regulator. The chain is Basic leucine zipper 6 (BZIP06) from Oryza sativa subsp. japonica (Rice).